Consider the following 433-residue polypeptide: Serendipity locus protein delta (433 aa).

Residues M1–K90 form the ZAD domain. Zn(2+)-binding residues include C4, C7, C61, and C64. The disordered stretch occupies residues D141–E162. The span at V149–E162 shows a compositional bias: acidic residues. Positions P187–K193 match the Nuclear localization signal motif. 7 C2H2-type zinc fingers span residues Q194–H217, H223–H245, K251–H273, Y279–H301, I308–H330, H337–H359, and G405–H428.

Homodimer (via ZAD domain) in solution. Binds DNA as a homodimer. N-terminal regions of the protein are required, in addition to the zinc fingers, for the specificity of chromatin-binding. In terms of tissue distribution, predominantly localized to the sub- and supraesophagal ganglia and the ventral nerve cord in the embryo, after dorsal closure.

Its subcellular location is the nucleus. Functionally, transcriptional activator that controls bicoid gene expression during oogenesis. Found in transcriptionally active cells. Binds to specific sites on polytene chromosomes of third instar larvae. Binds to the consensus DNA sequence 5'-YTAGAGATGGRAA-3'. This Drosophila melanogaster (Fruit fly) protein is Serendipity locus protein delta (Sry-delta).